A 380-amino-acid chain; its full sequence is Cytochrome b (380 aa).

The next 4 membrane-spanning stretches (helical) occupy residues Phe-33–Met-53, Trp-77–Val-98, Trp-113–Leu-133, and Phe-178–Leu-198. Heme b is bound by residues His-83 and His-97. Residues His-182 and His-196 each coordinate heme b. His-201 serves as a coordination point for a ubiquinone. 4 helical membrane-spanning segments follow: residues Ile-226–Phe-246, Leu-288–Asn-308, Ile-320–Gly-340, and Phe-347–Pro-367.

This sequence belongs to the cytochrome b family. As to quaternary structure, the cytochrome bc1 complex contains 11 subunits: 3 respiratory subunits (MT-CYB, CYC1 and UQCRFS1), 2 core proteins (UQCRC1 and UQCRC2) and 6 low-molecular weight proteins (UQCRH/QCR6, UQCRB/QCR7, UQCRQ/QCR8, UQCR10/QCR9, UQCR11/QCR10 and a cleavage product of UQCRFS1). This cytochrome bc1 complex then forms a dimer. Requires heme b as cofactor.

Its subcellular location is the mitochondrion inner membrane. Its function is as follows. Component of the ubiquinol-cytochrome c reductase complex (complex III or cytochrome b-c1 complex) that is part of the mitochondrial respiratory chain. The b-c1 complex mediates electron transfer from ubiquinol to cytochrome c. Contributes to the generation of a proton gradient across the mitochondrial membrane that is then used for ATP synthesis. The protein is Cytochrome b (MT-CYB) of Thomasomys ischyrus (Strong-tailed oldfield mouse).